The sequence spans 228 residues: Superoxide dismutase [Mn], mitochondrial (228 aa).

A mitochondrion-targeting transit peptide spans methionine 1–cysteine 24. Histidine 52, histidine 100, aspartate 189, and histidine 193 together coordinate Mn(2+).

This sequence belongs to the iron/manganese superoxide dismutase family. As to quaternary structure, homotetramer. It depends on Mn(2+) as a cofactor.

It localises to the mitochondrion matrix. The catalysed reaction is 2 superoxide + 2 H(+) = H2O2 + O2. Its function is as follows. Destroys superoxide anion radicals which are normally produced within the cells and which are toxic to biological systems. This Capsicum annuum (Capsicum pepper) protein is Superoxide dismutase [Mn], mitochondrial (SODA).